Consider the following 90-residue polypeptide: Histone H1.M6.2 (90 aa).

A disordered region spans residues 1-90; sequence MSDAAVPPKK…KAVKKAPKKK (90 aa). Over residues 11-90 the composition is skewed to basic residues; the sequence is ASPKKAAAKK…KAVKKAPKKK (80 aa).

It is found in the nucleus. The protein resides in the chromosome. The protein is Histone H1.M6.2 of Trypanosoma cruzi.